Reading from the N-terminus, the 828-residue chain is MAAEEADVDIEGDVVAAAGAQPGSGENTASVLQKDHYLDSSWRTENGLIPWTLDNTISEENRAVIEKMLLEEEYYLSKKSQPEKVWLDQKEDDKKYMKSLQKTAKIMVHSPTKPASYSVKWTIEEKELFEQGLAKFGRRWTKISKLIGSRTVLQVKSYARQYFKNKVKCGLDKETPNQKTGHNLQVKNEDKGTKAWTPSCLRGRADPNLNAVKIEKLSDDEEVDITDEVDELSSQTPQKNSSSDLLLDFPNSKMHETNQGEFITSDSQEALFSKSSRGCLQNEKQDETLSSSEITLWTEKQSNGDKKSIELNDQKFNELIKNCNKHDGRGIIVDARQLPSPEPCEIQKNLNDNEMLFHSCQMVEESHEEEELKPPEQEIEIDRNIIQEEEKQAIPEFFEGRQAKTPERYLKIRNYILDQWEICKPKYLNKTSVRPGLKNCGDVNCIGRIHTYLELIGAINFGCEQAVYNRPQTVDKVRIRDRKDAVEAYQLAQRLQSMRTRRRRVRDPWGNWCDAKDLEGQTFEHLSAEELAKRREEEKGRPVKSLKVPRPTKSSFDPFQLIPCNFFSEEKQEPFQVKVASEALLIMDLHAHVSMAEVIGLLGGRYSEVDKVVEVCAAEPCNSLSTGLQCEMDPVSQTQASETLAVRGFSVIGWYHSHPAFDPNPSLRDIDTQAKYQSYFSRGGAKFIGMIVSPYNRNNPLPYSQITCLVISEEISPDGSYRLPYKFEVQQMLEEPQWGLVFEKTRWIIEKYRLSHSSVPMDKIFRRDSDLTCLQKLLECMRKTLSKVTNCFMAEEFLTEIENLFLSNYKSNQENGVTEENCTKELLM.

The span at 1 to 12 (MAAEEADVDIEG) shows a compositional bias: acidic residues. Residues 1-31 (MAAEEADVDIEGDVVAAAGAQPGSGENTASV) are disordered. Serine 110 carries the post-translational modification Phosphoserine. The SANT domain occupies 116–167 (SYSVKWTIEEKELFEQGLAKFGRRWTKISKLIGSRTVLQVKSYARQYFKNKV). Residue lysine 187 forms a Glycyl lysine isopeptide (Lys-Gly) (interchain with G-Cter in SUMO2) linkage. The residue at position 218 (serine 218) is a Phosphoserine. At threonine 236 the chain carries Phosphothreonine. A phosphoserine mark is found at serine 242, serine 267, and serine 340. In terms of domain architecture, SWIRM spans 372 to 470 (LKPPEQEIEI…FGCEQAVYNR (99 aa)). An MPN domain is found at 577–709 (VKVASEALLI…PLPYSQITCL (133 aa)). The Zn(2+) site is built by histidine 656, histidine 658, and aspartate 669. A JAMM motif motif is present at residues 656–669 (HSHPAFDPNPSLRD). The LXXLL motif motif lies at 774 to 778 (LQKLL).

Belongs to the peptidase M67A family. MYSM1 subfamily. In terms of assembly, component of a large chromatin remodeling complex, at least composed of MYSM1, PCAF, RBM10 and KIF11/TRIP5. Binds histones. Interacts with NFIL3; this interaction is critical for their correct recruitment to the ID2 locus during natural killer cell maturation.

The protein localises to the nucleus. It is found in the cytoplasm. Its function is as follows. Metalloprotease with deubiquitinase activity that plays important regulator roles in hematopoietic stem cell function, blood cell production and immune response. Participates in the normal programming of B-cell responses to antigen after the maturation process. Within the cytoplasm, plays critical roles in the repression of innate immunity and autoimmunity. Removes 'Lys-63'-linked polyubiquitins from TRAF3 and TRAF6 complexes. Attenuates NOD2-mediated inflammation and tissue injury by promoting 'Lys-63'-linked deubiquitination of RIPK2 component. Suppresses the CGAS-STING1 signaling pathway by cleaving STING1 'Lys-63'-linked ubiquitin chains. In the nucleus, acts as a hematopoietic transcription regulator derepressing a range of genes essential for normal stem cell differentiation including EBF1 and PAX5 in B-cells, ID2 in NK-cell progenitor or FLT3 in dendritic cell precursors. Deubiquitinates monoubiquitinated histone H2A, a specific tag for epigenetic transcriptional repression, leading to dissociation of histone H1 from the nucleosome. This chain is Deubiquitinase MYSM1 (MYSM1), found in Homo sapiens (Human).